A 995-amino-acid polypeptide reads, in one-letter code: MPTHNSHSQPSSEDEGPPQSIIFGDHKLPEHPPTPNSPLQQTTNPFILESDGPHRQPHQSTIYSPGPFREPSTSRSPSHSRSRSTSPANSPGHSTISALASQSGVTASAGLGMTGADTAAASSKPTFREVPVPLSPTALSRQTSKSPAKSPRMGKGEGYLDPTILSVASGSRNSGKGKERTRRKGGHKYHSLHVQDEEEEEPPESDALRTRGKVGLNAYEKALWKWVNVDDLDGFLQEVYDYYKGKGIYCIVLARVLNLLTTFFVIAFSTFLISCIDYSKLFSSISTAEAVGRLEDVLVAQCITKGSFAHTLFLIILSAFFIFQVASFAMSVPRLLDMYRFYTHLLGVPDADIQTLPWPEIVRLIGDIRKHNPVTSLSNGQATALADMVGNDAKAPAKKLDAHDIANRILRQENYLIALFNKDLLDLRVRIPVPHVLTAFIPSSILISSADAPLPSLQSEPERKFLSFGANHLTKALEWNLRFCLLGYLFDRRGQVRKEFVREKRRKDLVQGLRRRFIFMGILNAIFAPFIILYLLIYSFFRYFEEYHKNPSSIGSRQYTPYAQWKFREFNELPHLFERRLDRSYEIAKEYVDQFPKERTALVMRFVAFIAGSFAAVLLVASLIDPDLFLHFEITPHRTVLFYLGVFGSILAISRGMVPQENMVFDPEASLNEVVRWTHYLPVEWRGQLHSQMVHQEFSKLFALKIMIFFSELLSVILTPFILFFSLPPCAAAIIDFFREFTVHVDGVGYVCSFAVFDFARYGNVDANQPETGLEGATGPDGGPAADGFAAGKPSRPTTRRTTSSSPSRLKHRDWRGNENKMEQSFLHFKATHPDWQPSDPSSSLFLDRLMGAGTRNRHGGGPVSAATGGISGSIYGGGGGGVGGRGLGVDGSVMAEMEEERLRAKRQSYERAWAKSSHLHRPDSSHSHPLRHPHSAASEIIEEEEGGEGDKGDDSIDGWSKRVKTDGETDDEEERERLWKDEGVVGLLQQVLGR.

Residues 1 to 11 (MPTHNSHSQPS) show a composition bias toward polar residues. The tract at residues 1 to 208 (MPTHNSHSQP…EEEPPESDAL (208 aa)) is disordered. The Cytoplasmic portion of the chain corresponds to 1-255 (MPTHNSHSQP…KGIYCIVLAR (255 aa)). A compositionally biased stretch (low complexity) spans 69 to 91 (REPSTSRSPSHSRSRSTSPANSP). Polar residues-rich tracts occupy residues 92-106 (GHST…SGVT) and 137-147 (TALSRQTSKSP). Over residues 179–191 (ERTRRKGGHKYHS) the composition is skewed to basic residues. The chain crosses the membrane as a helical span at residues 256-276 (VLNLLTTFFVIAFSTFLISCI). Residues 277–311 (DYSKLFSSISTAEAVGRLEDVLVAQCITKGSFAHT) are Lumenal-facing. Residues 312–332 (LFLIILSAFFIFQVASFAMSV) form a helical membrane-spanning segment. The Cytoplasmic portion of the chain corresponds to 333–516 (PRLLDMYRFY…KDLVQGLRRR (184 aa)). Residues 517 to 537 (FIFMGILNAIFAPFIILYLLI) lie within the membrane without spanning it. The Cytoplasmic portion of the chain corresponds to 538 to 605 (YSFFRYFEEY…PKERTALVMR (68 aa)). A helical membrane pass occupies residues 606-626 (FVAFIAGSFAAVLLVASLIDP). The Lumenal segment spans residues 627-638 (DLFLHFEITPHR). The helical transmembrane segment at 639 to 659 (TVLFYLGVFGSILAISRGMVP) threads the bilayer. Residues 660 to 705 (QENMVFDPEASLNEVVRWTHYLPVEWRGQLHSQMVHQEFSKLFALK) are Cytoplasmic-facing. An intramembrane segment occupies 706 to 726 (IMIFFSELLSVILTPFILFFS). Residues 727–995 (LPPCAAAIID…VGLLQQVLGR (269 aa)) lie on the Cytoplasmic side of the membrane. Disordered stretches follow at residues 771-817 (ETGL…DWRG) and 914-978 (WAKS…ERER). The segment covering 783–808 (GPAADGFAAGKPSRPTTRRTTSSSPS) has biased composition (low complexity). Residues 949-968 (EGDKGDDSIDGWSKRVKTDG) show a composition bias toward basic and acidic residues.

The protein belongs to the ATG9 family. As to quaternary structure, homotrimer; forms a homotrimer with a central pore that forms a path between the two membrane leaflets. Phosphorylated by ATG1. ATG1 phosphorylation is required for preautophagosome elongation.

It localises to the preautophagosomal structure membrane. Its subcellular location is the cytoplasmic vesicle membrane. It is found in the golgi apparatus membrane. The protein resides in the endoplasmic reticulum membrane. It catalyses the reaction a 1,2-diacyl-sn-glycero-3-phosphocholine(in) = a 1,2-diacyl-sn-glycero-3-phosphocholine(out). It carries out the reaction a 1,2-diacyl-sn-glycero-3-phospho-L-serine(in) = a 1,2-diacyl-sn-glycero-3-phospho-L-serine(out). The catalysed reaction is a 1,2-diacyl-sn-glycero-3-phosphoethanolamine(in) = a 1,2-diacyl-sn-glycero-3-phosphoethanolamine(out). The enzyme catalyses a 1,2-diacyl-sn-glycero-3-phospho-(1D-myo-inositol-3-phosphate)(in) = a 1,2-diacyl-sn-glycero-3-phospho-(1D-myo-inositol-3-phosphate)(out). Functionally, phospholipid scramblase involved in autophagy and cytoplasm to vacuole transport (Cvt) vesicle formation. Cycles between the preautophagosomal structure/phagophore assembly site (PAS) and the cytoplasmic vesicle pool and supplies membrane for the growing autophagosome. Lipid scramblase activity plays a key role in preautophagosomal structure/phagophore assembly by distributing the phospholipids that arrive through ATG2 from the cytoplasmic to the luminal leaflet of the bilayer, thereby driving autophagosomal membrane expansion. Required for mitophagy. Also involved in endoplasmic reticulum-specific autophagic process and is essential for the survival of cells subjected to severe ER stress. Different machineries are required for anterograde trafficking to the PAS during either the Cvt pathway or bulk autophagy and for retrograde trafficking. In Cryptococcus neoformans var. neoformans serotype D (strain JEC21 / ATCC MYA-565) (Filobasidiella neoformans), this protein is Autophagy-related protein 9 (ATG9).